A 142-amino-acid chain; its full sequence is MENKDIRKILPHRYPFLLVDRIIEIEEGKKAVGIKNVTANEPFFQGHFPDNPIMPGVLIVEALAQVAGIAVMNIEEFKGKLGLFTGIDKCRFKKVVRPGDQLVLEVLIDSIKMGLVKAKGVAKVGDEVAATAELMFIMTEEG.

His47 is an active-site residue.

It belongs to the thioester dehydratase family. FabZ subfamily.

The protein localises to the cytoplasm. The catalysed reaction is a (3R)-hydroxyacyl-[ACP] = a (2E)-enoyl-[ACP] + H2O. Functionally, involved in unsaturated fatty acids biosynthesis. Catalyzes the dehydration of short chain beta-hydroxyacyl-ACPs and long chain saturated and unsaturated beta-hydroxyacyl-ACPs. The polypeptide is 3-hydroxyacyl-[acyl-carrier-protein] dehydratase FabZ (Thermoanaerobacter pseudethanolicus (strain ATCC 33223 / 39E) (Clostridium thermohydrosulfuricum)).